Consider the following 722-residue polypeptide: Methionine--tRNA ligase (722 aa).

The short motif at 11–21 is the 'HIGH' region element; that stretch reads PYANGPIHAGH. The Zn(2+) site is built by Cys143, Cys146, Cys156, and Cys159. Positions 344 to 348 match the 'KMSKS' region motif; sequence KFSTS. An ATP-binding site is contributed by Thr347. One can recognise a tRNA-binding domain in the interval 622 to 722; the sequence is DFAKLDLRVG…KEVKLGAKVR (101 aa).

The protein belongs to the class-I aminoacyl-tRNA synthetase family. MetG type 1 subfamily. Homodimer. The cofactor is Zn(2+).

Its subcellular location is the cytoplasm. It carries out the reaction tRNA(Met) + L-methionine + ATP = L-methionyl-tRNA(Met) + AMP + diphosphate. In terms of biological role, is required not only for elongation of protein synthesis but also for the initiation of all mRNA translation through initiator tRNA(fMet) aminoacylation. This chain is Methionine--tRNA ligase, found in Pyrococcus abyssi (strain GE5 / Orsay).